Consider the following 345-residue polypeptide: NADPH dehydrogenase (345 aa).

23–26 is a binding site for FMN; it reads SPMC. Position 28 (tyrosine 28) interacts with substrate. FMN-binding residues include alanine 60 and glutamine 102. 164–167 is a substrate binding site; the sequence is HGAH. FMN is bound by residues arginine 215 and 307 to 308; that span reads GR.

This sequence belongs to the NADH:flavin oxidoreductase/NADH oxidase family. NamA subfamily. In terms of assembly, homotetramer. FMN is required as a cofactor.

The enzyme catalyses A + NADPH + H(+) = AH2 + NADP(+). Functionally, catalyzes the reduction of the double bond of an array of alpha,beta-unsaturated aldehydes and ketones. It also reduces the nitro group of nitroester and nitroaromatic compounds. It could have a role in detoxification processes. In Bacillus mycoides (strain KBAB4) (Bacillus weihenstephanensis), this protein is NADPH dehydrogenase.